The primary structure comprises 122 residues: Protein YqjC (122 aa).

Residues 1 to 20 (MKYRIALAVSLFALSAGSYA) form the signal peptide. Residues 65–100 (QLRADHQKKIAKQKDEVAERQQDLAEAKQKGDADKI) are disordered. The span at 66–100 (LRADHQKKIAKQKDEVAERQQDLAEAKQKGDADKI) shows a compositional bias: basic and acidic residues.

The polypeptide is Protein YqjC (yqjC) (Escherichia coli (strain K12)).